Here is a 373-residue protein sequence, read N- to C-terminus: Arfaptin-1 (373 aa).

The segment at 1–47 (MAQESPKNSAAEIPVTSNGEVDDAHEHGYNRDLKHSLPSGLGLSETQ) is disordered. Residue alanine 2 is modified to N-acetylalanine. Phosphoserine is present on serine 5. Over residues 22-35 (DDAHEHGYNRDLKH) the composition is skewed to basic and acidic residues. A phosphoserine mark is found at serine 36, serine 39, serine 69, serine 79, and serine 132. Residues 153 to 353 (TVDLELEAQI…NQKQLELTLK (201 aa)) form the AH domain. Threonine 361 is modified (phosphothreonine).

In terms of assembly, forms homodimers or heterodimers with ARFIP2. Interacts with non-myristoylated GTP-bound ARF3, but not to GDP-bound ARF3. Interacts with ARF1. Binds with lower affinity to ARF5 and with very little affinity to ARF6. Interacts with ARL1. Interacts with ATG9A. In terms of processing, phosphorylated by PRKD1; phosphorylation delocalizes ARFIP1 from the Golgi and disrupts its ability to inhibit the activity of ADP-ribosylation factor, an important component of the vesicle scission machinery.

The protein localises to the golgi apparatus. The protein resides in the trans-Golgi network membrane. Plays a role in controlling biogenesis of secretory granules at the trans-Golgi network. Mechanistically, binds ARF-GTP at the neck of a growing secretory granule precursor and forms a protective scaffold. Once the granule precursor has been completely loaded, active PRKD1 phosphorylates ARFIP1 and releases it from ARFs. In turn, ARFs induce fission. Through this mechanism, ensures proper secretory granule formation at the Golgi of pancreatic beta cells. The sequence is that of Arfaptin-1 from Mus musculus (Mouse).